Reading from the N-terminus, the 248-residue chain is 3-deoxy-manno-octulosonate cytidylyltransferase (248 aa).

This sequence belongs to the KdsB family.

It localises to the cytoplasm. The catalysed reaction is 3-deoxy-alpha-D-manno-oct-2-ulosonate + CTP = CMP-3-deoxy-beta-D-manno-octulosonate + diphosphate. Its pathway is nucleotide-sugar biosynthesis; CMP-3-deoxy-D-manno-octulosonate biosynthesis; CMP-3-deoxy-D-manno-octulosonate from 3-deoxy-D-manno-octulosonate and CTP: step 1/1. It functions in the pathway bacterial outer membrane biogenesis; lipopolysaccharide biosynthesis. In terms of biological role, activates KDO (a required 8-carbon sugar) for incorporation into bacterial lipopolysaccharide in Gram-negative bacteria. The chain is 3-deoxy-manno-octulosonate cytidylyltransferase from Shigella flexneri.